The chain runs to 616 residues: Nucleoprotein (616 aa).

2 short sequence motifs (nuclear localization signal) span residues Arg-230–Arg-233 and Lys-473–Lys-476.

In terms of assembly, homomultimerizes to form the nucleocapsid. Binds to viral genomic RNA. Protein-RNA contacts are mediated by a combination of electrostatic interactions between positively charged residues and the phosphate backbone and planar interactions between aromatic side chains and bases.

It is found in the virion. The protein localises to the host nucleus. It localises to the host nucleolus. Its function is as follows. Encapsidates the negative strand viral RNA, protecting it from nucleases. The encapsidated genomic RNA is termed the ribonucleoprotein (RNP) and serves as template for transcription and replication. The polypeptide is Nucleoprotein (Gadus morhua (Atlantic cod)).